The following is a 203-amino-acid chain: Urease accessory protein UreG (203 aa).

Residue 10 to 17 coordinates GTP; sequence GPVGAGKT.

It belongs to the SIMIBI class G3E GTPase family. UreG subfamily. In terms of assembly, homodimer. UreD, UreF and UreG form a complex that acts as a GTP-hydrolysis-dependent molecular chaperone, activating the urease apoprotein by helping to assemble the nickel containing metallocenter of UreC. The UreE protein probably delivers the nickel.

The protein localises to the cytoplasm. Its function is as follows. Facilitates the functional incorporation of the urease nickel metallocenter. This process requires GTP hydrolysis, probably effectuated by UreG. This is Urease accessory protein UreG from Kocuria rhizophila (strain ATCC 9341 / DSM 348 / NBRC 103217 / DC2201).